Here is a 493-residue protein sequence, read N- to C-terminus: GTPase Der (493 aa).

Residues 3 to 166 (PVIALVGRPN…EALGIFPKDN (164 aa)) enclose the EngA-type G 1 domain. GTP is bound by residues 9–16 (GRPNVGKS), 56–60 (DTGGI), and 118–121 (NKVD). Residues 166–195 (NAEEEGEGEPASEEVAEGEEPTRIPGPSEK) are disordered. Positions 167 to 184 (AEEEGEGEPASEEVAEGE) are enriched in acidic residues. Residues 198-371 (IKIAIIGRPN…SVQESFRSAV (174 aa)) form the EngA-type G 2 domain. GTP-binding positions include 204 to 211 (GRPNVGKS), 251 to 255 (DTAGV), and 316 to 319 (NKWD). In terms of domain architecture, KH-like spans 372 to 456 (TRWPTSRLTS…PIRIEYKGGE (85 aa)). Basic and acidic residues predominate over residues 454-463 (GGENPYEGKK). Positions 454 to 493 (GGENPYEGKKNSLTARQVNKKRRLMSHHKKAEKKKKDKRR) are disordered. Basic residues predominate over residues 471–493 (VNKKRRLMSHHKKAEKKKKDKRR).

The protein belongs to the TRAFAC class TrmE-Era-EngA-EngB-Septin-like GTPase superfamily. EngA (Der) GTPase family. Associates with the 50S ribosomal subunit.

Its function is as follows. GTPase that plays an essential role in the late steps of ribosome biogenesis. The polypeptide is GTPase Der (Pseudomonas aeruginosa (strain UCBPP-PA14)).